The sequence spans 223 residues: Chorismate dehydratase (223 aa).

Belongs to the MqnA/MqnD family. MqnA subfamily.

It catalyses the reaction chorismate = 3-[(1-carboxyvinyl)-oxy]benzoate + H2O. The protein operates within quinol/quinone metabolism; menaquinone biosynthesis. Its function is as follows. Catalyzes the dehydration of chorismate into 3-[(1-carboxyvinyl)oxy]benzoate, a step in the biosynthesis of menaquinone (MK, vitamin K2). The chain is Chorismate dehydratase from Campylobacter jejuni subsp. jejuni serotype O:23/36 (strain 81-176).